We begin with the raw amino-acid sequence, 150 residues long: Large ribosomal subunit protein bL9 (150 aa).

Belongs to the bacterial ribosomal protein bL9 family.

Binds to the 23S rRNA. The polypeptide is Large ribosomal subunit protein bL9 (Thioalkalivibrio sulfidiphilus (strain HL-EbGR7)).